A 154-amino-acid polypeptide reads, in one-letter code: MRCPFCAHDDSQVKDSRPTDDGAAIRRRRQCEGCGARFTTFERIQLREMTVVKSDGRREVFDRSKLERSISVACRKRPVDPARIERLATAIQRQIETSGDSEIPAASVGGMVMDGLKALDSVAYIRFASVYKDFREAKDFEDFAGAVSEAGRDG.

The tract at residues 1 to 22 (MRCPFCAHDDSQVKDSRPTDDG) is disordered. A zinc finger spans residues 3-34 (CPFCAHDDSQVKDSRPTDDGAAIRRRRQCEGC). Residues 7-22 (AHDDSQVKDSRPTDDG) show a composition bias toward basic and acidic residues. Positions 49-139 (MTVVKSDGRR…VYKDFREAKD (91 aa)) constitute an ATP-cone domain.

Belongs to the NrdR family. Zn(2+) serves as cofactor.

Its function is as follows. Negatively regulates transcription of bacterial ribonucleotide reductase nrd genes and operons by binding to NrdR-boxes. The protein is Transcriptional repressor NrdR of Rhizorhabdus wittichii (strain DSM 6014 / CCUG 31198 / JCM 15750 / NBRC 105917 / EY 4224 / RW1) (Sphingomonas wittichii).